We begin with the raw amino-acid sequence, 732 residues long: Calcineurin-interacting protein 2 (732 aa).

6 disordered regions span residues 1 to 24 (MNRG…REPY), 115 to 169 (DYEP…ALPK), 181 to 232 (QKKD…LDDR), 310 to 351 (ILSR…TSRR), 372 to 397 (RSQS…STVS), and 426 to 708 (QTVT…PLEE). Residues 8–17 (YNRSRSTSSR) are compositionally biased toward polar residues. Over residues 117 to 129 (EPLRKEPELKEQK) the composition is skewed to basic and acidic residues. Composition is skewed to polar residues over residues 151-163 (SGIT…SSRT) and 189-208 (IPRQ…NNEL). The span at 312 to 323 (SRSVSTSPSSVT) shows a compositional bias: low complexity. The segment covering 324–351 (DNIPKTSTSRIPSSENPKTMEHTTTSRR) has biased composition (polar residues). The span at 426-439 (QTVTNVRVPSSRGS) shows a compositional bias: polar residues. 2 stretches are compositionally biased toward basic and acidic residues: residues 526–538 (QSPE…RFAD) and 546–557 (PGDHQAREEDLP). The span at 607–619 (SVTPSEKSLPRNS) shows a compositional bias: polar residues. The segment covering 688 to 705 (NSPNKSSSSSKARPSAAP) has biased composition (low complexity).

As to quaternary structure, interacts with tax-6. In terms of tissue distribution, expressed in intestine.

This is Calcineurin-interacting protein 2 from Caenorhabditis elegans.